Consider the following 488-residue polypeptide: NAD-reducing hydrogenase HoxS subunit beta (488 aa).

Residues Cys62, Cys65, Cys458, and Cys461 each contribute to the Ni(2+) site.

The protein belongs to the [NiFe]/[NiFeSe] hydrogenase large subunit family. In terms of assembly, tetramer of an alpha and a gamma subunits (flavin-containing dimer), and a delta and a nickel-containing beta subunits (hydrogenase dimer). It depends on FMN as a cofactor. Ni(2+) serves as cofactor.

It is found in the cytoplasm. The catalysed reaction is H2 + NAD(+) = NADH + H(+). The sequence is that of NAD-reducing hydrogenase HoxS subunit beta (hoxH) from Cupriavidus necator (strain ATCC 17699 / DSM 428 / KCTC 22496 / NCIMB 10442 / H16 / Stanier 337) (Ralstonia eutropha).